The following is a 161-amino-acid chain: MTGLPFRIGYGEDAHRLAPGLPLVLGGVAIPHAELGAVAHSDGDAVLHAVADALLSGLALGDIGQYFPDTAAEWKGMDSRRILAKALELVEERGYRPVNVALVVTLDRPKLGPLRADIAASVAELLGLPAGEVGVSFKTSEGLALEHVQTRVTVLLGRVDD.

Positions 13 and 15 each coordinate a divalent metal cation. 4-CDP-2-C-methyl-D-erythritol 2-phosphate-binding positions include 13 to 15 (DAH) and 40 to 41 (HS). His48 serves as a coordination point for a divalent metal cation. A 4-CDP-2-C-methyl-D-erythritol 2-phosphate-binding site is contributed by 62–64 (DIG).

The protein belongs to the IspF family. Homotrimer. A divalent metal cation is required as a cofactor.

The enzyme catalyses 4-CDP-2-C-methyl-D-erythritol 2-phosphate = 2-C-methyl-D-erythritol 2,4-cyclic diphosphate + CMP. It participates in isoprenoid biosynthesis; isopentenyl diphosphate biosynthesis via DXP pathway; isopentenyl diphosphate from 1-deoxy-D-xylulose 5-phosphate: step 4/6. Functionally, involved in the biosynthesis of isopentenyl diphosphate (IPP) and dimethylallyl diphosphate (DMAPP), two major building blocks of isoprenoid compounds. Catalyzes the conversion of 4-diphosphocytidyl-2-C-methyl-D-erythritol 2-phosphate (CDP-ME2P) to 2-C-methyl-D-erythritol 2,4-cyclodiphosphate (ME-CPP) with a corresponding release of cytidine 5-monophosphate (CMP). The protein is 2-C-methyl-D-erythritol 2,4-cyclodiphosphate synthase of Deinococcus radiodurans (strain ATCC 13939 / DSM 20539 / JCM 16871 / CCUG 27074 / LMG 4051 / NBRC 15346 / NCIMB 9279 / VKM B-1422 / R1).